We begin with the raw amino-acid sequence, 262 residues long: Adenosylcobinamide-GDP ribazoletransferase (262 aa).

The next 6 membrane-spanning stretches (helical) occupy residues 43 to 63 (YFGLVGLLVGLLSAIVFWLTQ), 66 to 86 (LPAGVSVLLAMLVGVLLTGGF), 120 to 140 (GALALMLALLLKWQLLVELAL), 146 to 166 (AGSALIVAHTVSRMVSASIIF), 191 to 211 (LLILIASGVLVLLFLKGLAAL), and 242 to 262 (AAQQIAEIVCYFVLLVVGNIL).

Belongs to the CobS family. It depends on Mg(2+) as a cofactor.

Its subcellular location is the cell inner membrane. It catalyses the reaction alpha-ribazole + adenosylcob(III)inamide-GDP = adenosylcob(III)alamin + GMP + H(+). The catalysed reaction is alpha-ribazole 5'-phosphate + adenosylcob(III)inamide-GDP = adenosylcob(III)alamin 5'-phosphate + GMP + H(+). It functions in the pathway cofactor biosynthesis; adenosylcobalamin biosynthesis; adenosylcobalamin from cob(II)yrinate a,c-diamide: step 7/7. Functionally, joins adenosylcobinamide-GDP and alpha-ribazole to generate adenosylcobalamin (Ado-cobalamin). Also synthesizes adenosylcobalamin 5'-phosphate from adenosylcobinamide-GDP and alpha-ribazole 5'-phosphate. The sequence is that of Adenosylcobinamide-GDP ribazoletransferase from Shewanella baltica (strain OS155 / ATCC BAA-1091).